The following is a 247-amino-acid chain: 3-deoxy-manno-octulosonate cytidylyltransferase (247 aa).

Belongs to the KdsB family.

It is found in the cytoplasm. It carries out the reaction 3-deoxy-alpha-D-manno-oct-2-ulosonate + CTP = CMP-3-deoxy-beta-D-manno-octulosonate + diphosphate. It participates in nucleotide-sugar biosynthesis; CMP-3-deoxy-D-manno-octulosonate biosynthesis; CMP-3-deoxy-D-manno-octulosonate from 3-deoxy-D-manno-octulosonate and CTP: step 1/1. It functions in the pathway bacterial outer membrane biogenesis; lipopolysaccharide biosynthesis. Activates KDO (a required 8-carbon sugar) for incorporation into bacterial lipopolysaccharide in Gram-negative bacteria. This chain is 3-deoxy-manno-octulosonate cytidylyltransferase, found in Leptospira interrogans serogroup Icterohaemorrhagiae serovar Lai (strain 56601).